Reading from the N-terminus, the 491-residue chain is UDP-N-acetylmuramoyl-L-alanyl-D-glutamate--2,6-diaminopimelate ligase (491 aa).

Residue Ser-30 participates in UDP-N-acetyl-alpha-D-muramoyl-L-alanyl-D-glutamate binding. Gly-108–Thr-114 contributes to the ATP binding site. UDP-N-acetyl-alpha-D-muramoyl-L-alanyl-D-glutamate-binding positions include Asn-149, Thr-150 to Thr-151, Ser-177, and Arg-185. Lys-217 carries the N6-carboxylysine modification. Residues Arg-383, Asp-407 to Arg-410, Gly-457, and Glu-461 each bind meso-2,6-diaminopimelate. The Meso-diaminopimelate recognition motif motif lies at Asp-407–Arg-410.

Belongs to the MurCDEF family. MurE subfamily. Mg(2+) is required as a cofactor. In terms of processing, carboxylation is probably crucial for Mg(2+) binding and, consequently, for the gamma-phosphate positioning of ATP.

The protein localises to the cytoplasm. The enzyme catalyses UDP-N-acetyl-alpha-D-muramoyl-L-alanyl-D-glutamate + meso-2,6-diaminopimelate + ATP = UDP-N-acetyl-alpha-D-muramoyl-L-alanyl-gamma-D-glutamyl-meso-2,6-diaminopimelate + ADP + phosphate + H(+). It participates in cell wall biogenesis; peptidoglycan biosynthesis. In terms of biological role, catalyzes the addition of meso-diaminopimelic acid to the nucleotide precursor UDP-N-acetylmuramoyl-L-alanyl-D-glutamate (UMAG) in the biosynthesis of bacterial cell-wall peptidoglycan. The sequence is that of UDP-N-acetylmuramoyl-L-alanyl-D-glutamate--2,6-diaminopimelate ligase from Bacillus cereus (strain ATCC 14579 / DSM 31 / CCUG 7414 / JCM 2152 / NBRC 15305 / NCIMB 9373 / NCTC 2599 / NRRL B-3711).